A 755-amino-acid polypeptide reads, in one-letter code: Dolichyl-phosphate-mannose--protein mannosyltransferase 4 (755 aa).

Positions Met1–Ile23 are disordered. An N-linked (GlcNAc...) asparagine glycan is attached at Asn11. Residues Ser13–Ile23 are compositionally biased toward polar residues. The next 6 membrane-spanning stretches (helical) occupy residues Phe92–Gly112, Ile147–Phe167, Ile185–Phe205, Ser212–Ile232, Val237–Leu257, and Ala278–Leu298. MIR domains lie at Ser325 to Thr389, Gly396 to His454, and Lys466 to Ile523. Residue Asn445 is glycosylated (N-linked (GlcNAc...) asparagine). The next 3 helical transmembrane spans lie at Ile595–Ile615, Leu640–Leu660, and Tyr670–Ser690. A glycan (N-linked (GlcNAc...) asparagine) is linked at Asn691. A helical transmembrane segment spans residues Tyr706–Phe726.

It belongs to the glycosyltransferase 39 family. In terms of assembly, forms a functional homodimer.

It localises to the endoplasmic reticulum membrane. It carries out the reaction a di-trans,poly-cis-dolichyl beta-D-mannosyl phosphate + L-seryl-[protein] = 3-O-(alpha-D-mannosyl)-L-seryl-[protein] + a di-trans,poly-cis-dolichyl phosphate + H(+). It catalyses the reaction a di-trans,poly-cis-dolichyl beta-D-mannosyl phosphate + L-threonyl-[protein] = 3-O-(alpha-D-mannosyl)-L-threonyl-[protein] + a di-trans,poly-cis-dolichyl phosphate + H(+). Its pathway is protein modification; protein glycosylation. Its function is as follows. Protein mannosyltransferase (PMT) involved in hyphal growth and drug sensitivity. Transfers mannose from Dol-P-mannose to Ser or Thr residues on proteins. PMT1, PMT2 and PMT4 account for most of the protein-O-glycosylation activity, while PMT5 and PMT6 may specifically modulate a much narrower spectrum of target proteins. Accounts for the O-glycosylation of AXL2, responsible for bud site selection, as well as of the SEC20 t-SNARE component. O-glycosylation of SEC20 is essential for its stability. Required for biofilm formation. The sequence is that of Dolichyl-phosphate-mannose--protein mannosyltransferase 4 from Candida albicans (strain SC5314 / ATCC MYA-2876) (Yeast).